A 434-amino-acid chain; its full sequence is Trigger factor (434 aa).

Positions 160 to 245 constitute a PPIase FKBP-type domain; it reads GDKVKMNFVG…LTEVQAANLP (86 aa).

The protein belongs to the FKBP-type PPIase family. Tig subfamily.

It localises to the cytoplasm. The catalysed reaction is [protein]-peptidylproline (omega=180) = [protein]-peptidylproline (omega=0). Involved in protein export. Acts as a chaperone by maintaining the newly synthesized protein in an open conformation. Functions as a peptidyl-prolyl cis-trans isomerase. The protein is Trigger factor of Shewanella sp. (strain W3-18-1).